The chain runs to 505 residues: MNSVLSHRLMRPLAAAFVGVITPLAFAPYQFWPLALLSPFILLLLLHQQSAKRAALIAYLWGIGQFAVGISWVHVSIDTFGGMPKIASLFLMTLLVGYLALYPSLFGWLLNRLFPNNSRSKWLCAAPALWLITDWLRGWVMTGFPWLWLGYSQIDSPLANFAPIGGVELITLLLLFCAGSLAYAVLNRRWLMACIPLVVYATGYGLQAMQWVTPQTERTASLALIQGNIEQGLKWLPSQRWPTIMKYTDLTRENWDADVIIWPEAAIPAFEYEISSFLHNLDAAARMNQSAVITGIINQSDDKQYFNSVLTVGDTPHGEYRYDLTQRYHKYHLLPFGEFVPFEEILRPLAPFFNLPMSSFSQGAYVQPNLIAKGFAFVTALCYEIIFNEQVRDNVTPDTDFLLTLSNDAWFGRSIGPLQHMEIARMRALELGKPLIRATNNGVTAVTDERGRIMAQLPQFETGVLKATVTPTRGSTPYFLWGTTPLYLWVGLAAGFAFWRQRRAR.

6 helical membrane passes run 15-46 (AAFV…LLLL), 55-75 (ALIA…WVHV), 89-109 (LFLM…FGWL), 129-149 (LWLI…WLWL), 161-181 (FAPI…AGSL), and 192-212 (MACI…MQWV). One can recognise a CN hydrolase domain in the interval 225–471 (IQGNIEQGLK…TGVLKATVTP (247 aa)). Glu-264 acts as the Proton acceptor in catalysis. The active site involves Lys-330. Cys-382 serves as the catalytic Nucleophile. Residues 479–499 (FLWGTTPLYLWVGLAAGFAFW) form a helical membrane-spanning segment.

Belongs to the CN hydrolase family. Apolipoprotein N-acyltransferase subfamily.

It is found in the cell inner membrane. It catalyses the reaction N-terminal S-1,2-diacyl-sn-glyceryl-L-cysteinyl-[lipoprotein] + a glycerophospholipid = N-acyl-S-1,2-diacyl-sn-glyceryl-L-cysteinyl-[lipoprotein] + a 2-acyl-sn-glycero-3-phospholipid + H(+). It functions in the pathway protein modification; lipoprotein biosynthesis (N-acyl transfer). Its function is as follows. Catalyzes the phospholipid dependent N-acylation of the N-terminal cysteine of apolipoprotein, the last step in lipoprotein maturation. The protein is Apolipoprotein N-acyltransferase of Vibrio cholerae serotype O1 (strain ATCC 39315 / El Tor Inaba N16961).